The following is a 271-amino-acid chain: Bis(5'-nucleosyl)-tetraphosphatase, symmetrical (271 aa).

It belongs to the Ap4A hydrolase family.

It carries out the reaction P(1),P(4)-bis(5'-adenosyl) tetraphosphate + H2O = 2 ADP + 2 H(+). Functionally, hydrolyzes diadenosine 5',5'''-P1,P4-tetraphosphate to yield ADP. This chain is Bis(5'-nucleosyl)-tetraphosphatase, symmetrical, found in Aliivibrio fischeri (strain MJ11) (Vibrio fischeri).